The following is an 89-amino-acid chain: Small ribosomal subunit protein uS15 (89 aa).

This sequence belongs to the universal ribosomal protein uS15 family. Part of the 30S ribosomal subunit. Forms a bridge to the 50S subunit in the 70S ribosome, contacting the 23S rRNA.

In terms of biological role, one of the primary rRNA binding proteins, it binds directly to 16S rRNA where it helps nucleate assembly of the platform of the 30S subunit by binding and bridging several RNA helices of the 16S rRNA. Forms an intersubunit bridge (bridge B4) with the 23S rRNA of the 50S subunit in the ribosome. This Dinoroseobacter shibae (strain DSM 16493 / NCIMB 14021 / DFL 12) protein is Small ribosomal subunit protein uS15.